The sequence spans 280 residues: Ribosomal RNA-processing protein 7 homolog A (280 aa).

Over residues 1–10 the composition is skewed to basic residues; it reads MVSRRKKRKA. Positions 1 to 24 are disordered; that stretch reads MVSRRKKRKAGGHEESIPSPPGYS. One can recognise an RRM domain in the interval 59-159; sequence RTLFILNVPP…SGIHKWISDY (101 aa). Ser-99 carries the post-translational modification Phosphoserine.

The protein belongs to the RRP7 family. In terms of assembly, part of the small subunit (SSU) processome, composed of more than 70 proteins and the RNA chaperone small nucleolar RNA (snoRNA) U3. Interacts with NOL6; required for NOL6 localization to nucleolus.

Its subcellular location is the nucleus. It is found in the nucleolus. The protein resides in the cell projection. The protein localises to the cilium. It localises to the cytoplasm. Its subcellular location is the cytoskeleton. It is found in the microtubule organizing center. The protein resides in the centrosome. In terms of biological role, nucleolar protein that is involved in ribosomal RNA (rRNA) processing. Also plays a role in primary cilia resorption, and cell cycle progression in neurogenesis and neocortex development. Part of the small subunit (SSU) processome, first precursor of the small eukaryotic ribosomal subunit. During the assembly of the SSU processome in the nucleolus, many ribosome biogenesis factors, an RNA chaperone and ribosomal proteins associate with the nascent pre-rRNA and work in concert to generate RNA folding, modifications, rearrangements and cleavage as well as targeted degradation of pre-ribosomal RNA by the RNA exosome. This Mus musculus (Mouse) protein is Ribosomal RNA-processing protein 7 homolog A (Rrp7a).